The primary structure comprises 490 residues: uncharacterized protein (490 aa).

The chain crosses the membrane as a helical span at residues 27-47; it reads VYVFLTTIILLLSLISTLIII.

It is found in the membrane. This is an uncharacterized protein from Borreliella burgdorferi (strain ATCC 35210 / DSM 4680 / CIP 102532 / B31) (Borrelia burgdorferi).